The primary structure comprises 157 residues: Protein Smg homolog (157 aa).

It belongs to the Smg family.

The chain is Protein Smg homolog from Aliivibrio fischeri (strain ATCC 700601 / ES114) (Vibrio fischeri).